A 67-amino-acid polypeptide reads, in one-letter code: DNA-directed RNA polymerase subunit omega (67 aa).

Belongs to the RNA polymerase subunit omega family. The RNAP catalytic core consists of 2 alpha, 1 beta, 1 beta' and 1 omega subunit. When a sigma factor is associated with the core the holoenzyme is formed, which can initiate transcription.

The enzyme catalyses RNA(n) + a ribonucleoside 5'-triphosphate = RNA(n+1) + diphosphate. Promotes RNA polymerase assembly. Latches the N- and C-terminal regions of the beta' subunit thereby facilitating its interaction with the beta and alpha subunits. The sequence is that of DNA-directed RNA polymerase subunit omega from Listeria innocua serovar 6a (strain ATCC BAA-680 / CLIP 11262).